A 245-amino-acid chain; its full sequence is MDNALYVGLSRQMTLRRELDIVANNIANANTTGFKVEDLMVRTEQAKPAKTLDGSSPVKFVMDTGVARNFTQGPMTKTGGDYDLAINGMGFFKVQANGGERYTRDGRFTTNPEGILVTQAGAPVLDDGGGQITIDPRLGPVTVGKDGIVSQGAIRVGRIGLVRPDDLSTFAKDGDNLYRNTTNTAPQPVTDAQIHQGMLEASNVQPVIEITKLIEIQRAYESVAKMMDNTAELSRSAVERLGKIN.

It belongs to the flagella basal body rod proteins family. As to quaternary structure, the basal body constitutes a major portion of the flagellar organelle and consists of five rings (E,L,P,S, and M) mounted on a central rod. The rod consists of about 26 subunits of FlgG in the distal portion, and FlgB, FlgC and FlgF are thought to build up the proximal portion of the rod with about 6 subunits each.

Its subcellular location is the bacterial flagellum basal body. This Caulobacter vibrioides (strain ATCC 19089 / CIP 103742 / CB 15) (Caulobacter crescentus) protein is Flagellar basal-body rod protein FlgF (flgF).